A 47-amino-acid polypeptide reads, in one-letter code: Defensin-like protein 1 (47 aa).

Cystine bridges form between C5-C47, C16-C36, C22-C43, and C26-C45.

The protein belongs to the DEFL family.

Its function is as follows. Fabatins have antibacterial activity against Gram-positive and Gram-negative bacteria. High activity against P.aeruginosa. No activity against S.cerevisiae and C.albicans. The sequence is that of Defensin-like protein 1 from Vicia faba (Broad bean).